We begin with the raw amino-acid sequence, 246 residues long: Alpha-amylase inhibitor 1 (246 aa).

Positions 1–23 are cleaved as a signal peptide; that stretch reads MIMASSKLLSLALFLALLSHANS. 3 N-linked (GlcNAc...) asparagine glycosylation sites follow: Asn-35, Asn-88, and Asn-163. Positions 240 to 246 are excised as a propeptide; sequence IVLNKIL.

Belongs to the leguminous lectin family. Heterodimer of chain 1 and chain 2. In terms of processing, proteolytic processing yields active form.

Functionally, lectin and alpha-amylase inhibitor. Acts as a defensive protein against insects. This Phaseolus vulgaris (Kidney bean) protein is Alpha-amylase inhibitor 1 (LLP).